A 174-amino-acid chain; its full sequence is Period clock protein (174 aa).

Positions 46-134 (SSEGTGAGTG…GTGTGTGTGT (89 aa)) are disordered. 45 repeat units span residues 49-50 (GT), 51-52 (GA), 53-54 (GT), 55-56 (GT), 57-58 (GT), 59-60 (GT), 61-62 (GT), 63-64 (GT), 65-66 (GT), 67-68 (GT), 69-70 (GT), 71-72 (GT), 73-74 (GT), 75-76 (GT), 77-78 (GT), 79-80 (GT), 81-82 (GT), 83-84 (GT), 85-86 (GT), 87-88 (GT), 89-90 (GT), 91-92 (GT), 93-94 (GT), 95-96 (GT), 97-98 (GT), 99-100 (GT), 101-102 (GT), 103-104 (GT), 105-106 (GT), 107-108 (GT), 109-110 (GT), 111-112 (GT), 113-114 (GT), 115-116 (GT), 117-118 (GT), 119-120 (GT), 121-122 (GT), 123-124 (GT), 125-126 (GT), 127-128 (GT), 129-130 (GT), 131-132 (GT), 133-134 (GT), 135-136 (GT), and 137-138 (GT). Positions 49-138 (GTGAGTGTGT…GTGTGTGTGT (90 aa)) are 45 X 2 AA tandem repeats of G-[TA]. Gly residues predominate over residues 50 to 134 (TGAGTGTGTG…GTGTGTGTGT (85 aa)).

Its subcellular location is the plastid. The protein localises to the chloroplast. The protein is Period clock protein of Acetabularia acetabulum (Mermaid's wine glass).